The chain runs to 129 residues: C-phycocyanin beta subunit (129 aa).

N4-methylasparagine is present on asparagine 62. (2R,3E)-phycocyanobilin is bound at residue cysteine 116.

Belongs to the phycobiliprotein family. In terms of assembly, heterodimer of an alpha and a beta subunit, which further assembles into trimers and the trimers into hexamers. In terms of processing, two isomers exist. Post-translationally, contains two covalently linked bilin chromophores.

It localises to the cellular thylakoid membrane. In terms of biological role, light-harvesting photosynthetic bile pigment-protein from the phycobiliprotein complex (phycobilisome, PBS). Phycocyanin is the major phycobiliprotein in the PBS rod. In Aphanizomenon flos-aquae, this protein is C-phycocyanin beta subunit.